Reading from the N-terminus, the 440-residue chain is Thymidine phosphorylase (440 aa).

It belongs to the thymidine/pyrimidine-nucleoside phosphorylase family. As to quaternary structure, homodimer.

It catalyses the reaction thymidine + phosphate = 2-deoxy-alpha-D-ribose 1-phosphate + thymine. It participates in pyrimidine metabolism; dTMP biosynthesis via salvage pathway; dTMP from thymine: step 1/2. Functionally, the enzymes which catalyze the reversible phosphorolysis of pyrimidine nucleosides are involved in the degradation of these compounds and in their utilization as carbon and energy sources, or in the rescue of pyrimidine bases for nucleotide synthesis. This chain is Thymidine phosphorylase, found in Yersinia pseudotuberculosis serotype O:1b (strain IP 31758).